Here is an 883-residue protein sequence, read N- to C-terminus: Phosphoenolpyruvate carboxylase (883 aa).

Residues His-138 and Lys-546 contribute to the active site.

Belongs to the PEPCase type 1 family. It depends on Mg(2+) as a cofactor.

The enzyme catalyses oxaloacetate + phosphate = phosphoenolpyruvate + hydrogencarbonate. Its function is as follows. Forms oxaloacetate, a four-carbon dicarboxylic acid source for the tricarboxylic acid cycle. This is Phosphoenolpyruvate carboxylase from Salmonella arizonae (strain ATCC BAA-731 / CDC346-86 / RSK2980).